The primary structure comprises 395 residues: Zinc-regulated GTPase metalloprotein activator 1B (395 aa).

The disordered stretch occupies residues 1-36 (MLPAVGSADEEEDPAEEDCPELVPMETTQSEEEEKS). Acidic residues predominate over residues 8–20 (ADEEEDPAEEDCP). The psi-PxLVp motif motif lies at 17 to 24 (EDCPELVP). Residue 49-56 (GYLGAGKT) participates in GTP binding. Cys-107, Cys-109, and Cys-110 together coordinate Zn(2+). The CXCC motif signature appears at 107-110 (CLCC). Residues 110 to 114 (CSVKD) and 203 to 206 (NKTD) each bind GTP. Residues 274–377 (IVTITFEVPG…ILKQLFIATV (104 aa)) enclose the CobW C-terminal domain.

This sequence belongs to the SIMIBI class G3E GTPase family. ZNG1 subfamily.

The protein resides in the nucleus. The catalysed reaction is GTP + H2O = GDP + phosphate + H(+). Zinc chaperone that directly transfers zinc cofactor to target metalloproteins, thereby activating them. Catalyzes zinc insertion into the active site of methionine aminopeptidase METAP1, which function to cleave the initiator methionine from polypeptides during or after protein translation. Mechanistically, the N-terminal psi-PxLVp motif binds to the C6H2-type zinc finger of inactive form of METAP1. After formation of the docked complex, zinc is transferred from the CXCC motif in the GTPase domain of ZNG1B to the zinc binding site in the peptidase domain of METAP1 in a process requiring GTP hydrolysis. GTP/GDP exchange is required for release of active METAP1. This chain is Zinc-regulated GTPase metalloprotein activator 1B, found in Homo sapiens (Human).